A 231-amino-acid chain; its full sequence is MSNTPIELKGSSFTLSVVHLHEAEPKVIHQALEDKIAQAPAFLKHAPVVLNVSALEDPVNWSAMHKAVSATGLRVIGVSGCKDAQLKAEIEKMGLPILTEGKEKAPRPAPAPQAPTQNTTPVTKTRLIDTPVRSGQRIYAPQCDLIVTSHVSAGAELIADGNIHVYGMMRGRALAGASGDRETQIFCTNLMAELVSIAGEYWLSDQIPAEFYGKAARLQLVENALTVQPLN.

Positions 102–125 (KEKAPRPAPAPQAPTQNTTPVTKT) are disordered. The span at 114–123 (APTQNTTPVT) shows a compositional bias: low complexity.

It belongs to the MinC family. In terms of assembly, interacts with MinD and FtsZ.

In terms of biological role, cell division inhibitor that blocks the formation of polar Z ring septums. Rapidly oscillates between the poles of the cell to destabilize FtsZ filaments that have formed before they mature into polar Z rings. Prevents FtsZ polymerization. This chain is Probable septum site-determining protein MinC, found in Escherichia coli O45:K1 (strain S88 / ExPEC).